The following is a 473-amino-acid chain: BPI fold-containing family B member 3 (473 aa).

An N-terminal signal peptide occupies residues 1–20 (MMPGVYALLLLWGLATPCLG). The N-linked (GlcNAc...) asparagine glycan is linked to asparagine 139. Cysteine 161 and cysteine 196 are oxidised to a cystine.

It belongs to the BPI/LBP/Plunc superfamily. BPI/LBP family. In terms of tissue distribution, highly expressed in olfactory mucosa but undetectable in thymus, kidney, lung, brain, spleen and liver.

It is found in the secreted. In terms of biological role, may have the capacity to recognize and bind specific classes of odorants. May act as a carrier molecule, transporting odorants across the mucus layer to access receptor sites. May serve as a primary defense mechanism by recognizing and removing potentially harmful odorants or pathogenic microorganisms from the mucosa or clearing excess odorant from mucus to enable new odorant stimuli to be received. This chain is BPI fold-containing family B member 3, found in Rattus norvegicus (Rat).